We begin with the raw amino-acid sequence, 655 residues long: RNA-binding protein EWS (655 aa).

The segment at 1–285 (MASTDYSTYS…GVYGQESGGF (285 aa)) is EAD (Gln/Pro/Thr-rich). A run of 31 repeats spans residues 8 to 16 (TYSQAAAQQ), 17 to 27 (GYSAYTAQPTQ), 28 to 34 (GYAQTTQ), 35 to 42 (AYGQQSYG), 43 to 50 (TYGQPTDV), 51 to 59 (SYTQAQTTA), 60 to 68 (TYGQTAYAT), 69 to 75 (SYGQPPT), 76 to 84 (GYSTPTAPQ), 85 to 91 (AYSQPVQ), 92 to 110 (GYGTGTYDSTTATVTTTQA), 111 to 116 (SYAAQT), 117 to 125 (AYGTQPAYP), 126 to 156 (TYGQQPTATAPTRPQDGNKPAETSQPQSSTG), 157 to 163 (GYNQPSL), 164 to 170 (GYGQSNY), 171 to 177 (SYPQVPG), 178 to 188 (SYPMQPVTAPP), 189 to 193 (SYPPT), 194 to 201 (SYSSSQPT), 202 to 206 (SYDQS), 207 to 212 (SYSQQN), 213 to 218 (TYGQPS), 219 to 224 (SYGQQS), 225 to 230 (SYGQQS), 231 to 238 (SYGQQPPT), 239 to 245 (SYPPQTG), 246 to 252 (SYSQAPS), 253 to 259 (QYSQQSS), 260 to 276 (SYGQQSSFRQDHPSSMG), and 277 to 285 (VYGQESGGF). A 31 X approximate tandem repeats region spans residues 8-285 (TYSQAAAQQG…GVYGQESGGF (278 aa)). Residues 121–350 (QPAYPTYGQQ…EGPDLDLGLP (230 aa)) form a disordered region. Polar residues-rich tracts occupy residues 127–137 (YGQQPTATAPT) and 146–172 (AETSQPQSSTGGYNQPSLGYGQSNYSY). The span at 192–266 (PTSYSSSQPT…QSSSYGQQSS (75 aa)) shows a compositional bias: low complexity. Residues 256 to 285 (QQSSSYGQQSSFRQDHPSSMGVYGQESGGF) form the IQ domain. Serine 266 carries the phosphoserine; by PKC modification. An asymmetric dimethylarginine mark is found at arginine 300, arginine 302, arginine 304, arginine 309, arginine 314, arginine 317, and arginine 321. Residues 308 to 334 (DRGGMSRGGRGGGRGGLGAGERGGFNK) are compositionally biased toward gly residues. Positions 335 to 350 (PGGPMDEGPDLDLGLP) are enriched in low complexity. One can recognise an RRM domain in the interval 360 to 446 (SAIYVQGLND…SKLKVSLARK (87 aa)). Lysine 438 is modified (N6-acetyllysine). Disordered stretches follow at residues 447–524 (KPPM…WQCP) and 544–655 (APKP…DRPY). Asymmetric dimethylarginine occurs at positions 454 and 463. Arginine 470 is subject to Asymmetric dimethylarginine; alternate. Arginine 470 carries the post-translational modification Omega-N-methylarginine; alternate. A compositionally biased stretch (gly residues) spans 471-489 (GGPGGPGGPGGPMGRMGGR). The residue at position 485 (arginine 485) is an Omega-N-methylarginine. Residue arginine 489 is modified to Asymmetric dimethylarginine; by PRMT8. Residues arginine 493, arginine 499, and arginine 502 each carry the asymmetric dimethylarginine modification. Arginine 505 bears the Asymmetric dimethylarginine; alternate mark. Arginine 505 is modified (omega-N-methylarginine; alternate). The RanBP2-type zinc finger occupies 517 to 548 (RAGDWQCPNPGCGNQNFAWRTECNQCKAPKPE). The span at 550–559 (FLPPPFPPPG) shows a compositional bias: pro residues. Asymmetric dimethylarginine occurs at positions 562 and 564. The segment covering 565–590 (GGPGGMRGGRGGLMDRGGPGGMFRGG) has biased composition (gly residues). Arginine 571 carries the post-translational modification Asymmetric dimethylarginine; alternate; by PRMT8. Position 571 is an omega-N-methylarginine; alternate; by PRMT8 (arginine 571). Residues arginine 574, arginine 580, arginine 588, and arginine 591 each carry the asymmetric dimethylarginine modification. Residues 591-605 (RGGDRGGFRGGRGMD) show a composition bias toward basic and acidic residues. Arginine 595 is modified (asymmetric dimethylarginine; alternate; by PRMT8). Arginine 595 carries the omega-N-methylarginine; alternate; by PRMT8 modification. Arginine 599 carries the post-translational modification Asymmetric dimethylarginine. Arginine 602 bears the Asymmetric dimethylarginine; by PRMT8 mark. An Asymmetric dimethylarginine; alternate; by PRMT8 modification is found at arginine 606. At arginine 606 the chain carries Omega-N-methylarginine; alternate; by PRMT8. Positions 606-617 (RGGFGGGRRGGP) are enriched in gly residues. Arginine 614 is subject to Asymmetric dimethylarginine; alternate. Arginine 614 bears the Omega-N-methylarginine; alternate mark. 2 positions are modified to asymmetric dimethylarginine: arginine 632 and arginine 635. The short motif at 638-655 (PGKMDKGEHRQERRDRPY) is the Nuclear localization signal element. Basic and acidic residues predominate over residues 640–655 (KMDKGEHRQERRDRPY).

It belongs to the RRM TET family. Binds RNA, POLR2C, SF1 and calmodulin. Interacts with PTK2B and TDRD3. Forms a complex with REC8, PRDM9, SYCP3 and SYCP1; complex formation is dependent of phosphorylated form of REC8 and requires PRDM9 bound to hotspot DNA; EWSR1 joins PRDM9 with the chromosomal axis through REC8. Phosphorylated; calmodulin-binding inhibits phosphorylation of Ser-266. Post-translationally, highly methylated on arginine residues. Methylation is mediated by PRMT1 and, at lower level by PRMT8.

It localises to the nucleus. Its subcellular location is the cytoplasm. The protein resides in the cell membrane. In terms of biological role, binds to ssRNA containing the consensus sequence 5'-AGGUAA-3'. Might function as a transcriptional repressor. This chain is RNA-binding protein EWS (Ewsr1), found in Mus musculus (Mouse).